Consider the following 190-residue polypeptide: UPF0301 protein Pfl01_5311 (190 aa).

The protein belongs to the UPF0301 (AlgH) family.

The chain is UPF0301 protein Pfl01_5311 from Pseudomonas fluorescens (strain Pf0-1).